Here is a 106-residue protein sequence, read N- to C-terminus: Nucleoid-associated protein DIP0260 (106 aa).

The protein belongs to the YbaB/EbfC family. Homodimer.

The protein localises to the cytoplasm. The protein resides in the nucleoid. Binds to DNA and alters its conformation. May be involved in regulation of gene expression, nucleoid organization and DNA protection. The polypeptide is Nucleoid-associated protein DIP0260 (Corynebacterium diphtheriae (strain ATCC 700971 / NCTC 13129 / Biotype gravis)).